We begin with the raw amino-acid sequence, 114 residues long: MTVNIYDDANQMATNLQTLPQFLGLQNAFAALKKDDIAFTMFKKFQTQQMTLQQKQMQGEELTDDEIQEIQELAQKIGDIDAIKNLMEQERQLSQLMDELNQIISKPIADIYQG.

It belongs to the UPF0342 family.

In Latilactobacillus sakei subsp. sakei (strain 23K) (Lactobacillus sakei subsp. sakei), this protein is UPF0342 protein LCA_0622.